The chain runs to 51 residues: MPSHKSFMIKKKLGKKMRQNRPIPHWIRLRTDNTIRYNAKRRHWRRTKLGF.

Residues 1-21 (MPSHKSFMIKKKLGKKMRQNR) are disordered. Basic residues predominate over residues 7–19 (FMIKKKLGKKMRQ).

Belongs to the eukaryotic ribosomal protein eL39 family.

This is Large ribosomal subunit protein eL39z/eL39x (RPL39A) from Arabidopsis thaliana (Mouse-ear cress).